The primary structure comprises 403 residues: Phosphoglycerate kinase (403 aa).

Residues D21–N23, R36, H59–R62, R119, and R154 contribute to the substrate site. ATP-binding positions include K207, G299, E330, and G357–A360.

This sequence belongs to the phosphoglycerate kinase family. Monomer.

The protein localises to the cytoplasm. It carries out the reaction (2R)-3-phosphoglycerate + ATP = (2R)-3-phospho-glyceroyl phosphate + ADP. It participates in carbohydrate degradation; glycolysis; pyruvate from D-glyceraldehyde 3-phosphate: step 2/5. The protein is Phosphoglycerate kinase of Chlamydia trachomatis serovar L2 (strain ATCC VR-902B / DSM 19102 / 434/Bu).